Consider the following 578-residue polypeptide: Proline--tRNA ligase (578 aa).

This sequence belongs to the class-II aminoacyl-tRNA synthetase family. ProS type 1 subfamily. In terms of assembly, homodimer.

The protein resides in the cytoplasm. The catalysed reaction is tRNA(Pro) + L-proline + ATP = L-prolyl-tRNA(Pro) + AMP + diphosphate. Functionally, catalyzes the attachment of proline to tRNA(Pro) in a two-step reaction: proline is first activated by ATP to form Pro-AMP and then transferred to the acceptor end of tRNA(Pro). As ProRS can inadvertently accommodate and process non-cognate amino acids such as alanine and cysteine, to avoid such errors it has two additional distinct editing activities against alanine. One activity is designated as 'pretransfer' editing and involves the tRNA(Pro)-independent hydrolysis of activated Ala-AMP. The other activity is designated 'posttransfer' editing and involves deacylation of mischarged Ala-tRNA(Pro). The misacylated Cys-tRNA(Pro) is not edited by ProRS. The sequence is that of Proline--tRNA ligase from Burkholderia ambifaria (strain ATCC BAA-244 / DSM 16087 / CCUG 44356 / LMG 19182 / AMMD) (Burkholderia cepacia (strain AMMD)).